We begin with the raw amino-acid sequence, 439 residues long: Xaa-Pro dipeptidase (439 aa).

Mn(2+)-binding residues include D244, D255, H335, E380, and E419.

The protein belongs to the peptidase M24B family. Bacterial-type prolidase subfamily. Mn(2+) serves as cofactor.

It catalyses the reaction Xaa-L-Pro dipeptide + H2O = an L-alpha-amino acid + L-proline. Functionally, splits dipeptides with a prolyl residue in the C-terminal position. This chain is Xaa-Pro dipeptidase, found in Shewanella sp. (strain ANA-3).